The following is a 187-amino-acid chain: Small ribosomal subunit protein uS5 (187 aa).

One can recognise an S5 DRBM domain in the interval 21 to 84; it reads MVDKLVHINR…ESAKRDMIFV (64 aa).

It belongs to the universal ribosomal protein uS5 family. In terms of assembly, part of the 30S ribosomal subunit. Contacts proteins S4 and S8.

Functionally, with S4 and S12 plays an important role in translational accuracy. In terms of biological role, located at the back of the 30S subunit body where it stabilizes the conformation of the head with respect to the body. In Mesorhizobium japonicum (strain LMG 29417 / CECT 9101 / MAFF 303099) (Mesorhizobium loti (strain MAFF 303099)), this protein is Small ribosomal subunit protein uS5.